A 535-amino-acid polypeptide reads, in one-letter code: Serum response factor-binding protein 1 (535 aa).

2 coiled-coil regions span residues 5–27 (LNLN…LIIR) and 107–177 (LKQK…EKCK). Basic and acidic residues-rich tracts occupy residues 128–151 (AAEG…ETKK), 159–191 (KNTE…EKAL), 205–325 (AENK…ERPV), 361–376 (DKEK…ERFY), 406–432 (SDKD…EVQK), and 460–472 (TKRE…ERNK). Disordered regions lie at residues 128–435 (AAEG…KEIP) and 453–535 (TKPK…VFDD).

The protein localises to the cytoplasm. It is found in the perinuclear region. Functionally, may be involved in regulating transcriptional activation of cardiac genes during the aging process. May play a role in biosynthesis and/or processing of SLC2A4 in adipose cells. The protein is Serum response factor-binding protein 1 of Xenopus tropicalis (Western clawed frog).